We begin with the raw amino-acid sequence, 125 residues long: Fluoride-specific ion channel FluC (125 aa).

Transmembrane regions (helical) follow at residues 9–29 (LFCAGGGLTRYYLSGWIYGLL), 32–52 (AFPYGTLVVNIIGAYCIGLIM), 67–87 (IGLTVGFMGGLTTFSTFSYET), and 99–119 (AFTNVLASVAVCLLCTWLGII). Residues Gly75 and Thr78 each contribute to the Na(+) site.

Belongs to the fluoride channel Fluc/FEX (TC 1.A.43) family.

It localises to the cell inner membrane. It catalyses the reaction fluoride(in) = fluoride(out). Na(+) is not transported, but it plays an essential structural role and its presence is essential for fluoride channel function. Its function is as follows. Fluoride-specific ion channel. Important for reducing fluoride concentration in the cell, thus reducing its toxicity. The chain is Fluoride-specific ion channel FluC from Trichlorobacter lovleyi (strain ATCC BAA-1151 / DSM 17278 / SZ) (Geobacter lovleyi).